A 686-amino-acid chain; its full sequence is LEAF RUST 10 DISEASE-RESISTANCE LOCUS RECEPTOR-LIKE PROTEIN KINASE-like 1.3 (686 aa).

An N-terminal signal peptide occupies residues 1 to 33 (MFSPVLFRFSKPNSFLVLLFFLSYIHFLPCAQS). Residues 34 to 264 (QREPCDTLFR…AGLSKKGKIG (231 aa)) lie on the Extracellular side of the membrane. Residues Asn76, Asn93, Asn175, Asn190, and Asn236 are each glycosylated (N-linked (GlcNAc...) asparagine). Residues 265 to 285 (IGFASGFLGATLIGGCLLCIF) form a helical membrane-spanning segment. At 286-686 (IRRRKKLATQ…SSSNTTASSF (401 aa)) the chain is on the cytoplasmic side. The 276-residue stretch at 358–633 (ENFSKELGDG…DEIVEVLRVI (276 aa)) folds into the Protein kinase domain. Residues 364–372 (LGDGGFGTV) and Lys386 contribute to the ATP site. The residue at position 432 (Tyr432) is a Phosphotyrosine. Asp482 serves as the catalytic Proton acceptor. Position 515 is a phosphoserine (Ser515). Phosphothreonine is present on residues Thr516 and Thr521. Tyr529 is subject to Phosphotyrosine. Residues 657–686 (GLLKHGVPPPLSPETDKTTASSSNTTASSF) form a disordered region. The span at 674–686 (TTASSSNTTASSF) shows a compositional bias: low complexity.

It belongs to the protein kinase superfamily. Ser/Thr protein kinase family.

It is found in the cell membrane. It catalyses the reaction L-seryl-[protein] + ATP = O-phospho-L-seryl-[protein] + ADP + H(+). It carries out the reaction L-threonyl-[protein] + ATP = O-phospho-L-threonyl-[protein] + ADP + H(+). In Arabidopsis thaliana (Mouse-ear cress), this protein is LEAF RUST 10 DISEASE-RESISTANCE LOCUS RECEPTOR-LIKE PROTEIN KINASE-like 1.3.